The sequence spans 236 residues: MKINILTLFPEMFDIFKHSIIGRARENGFLHIETVNIRDYTLNKHKKVDDYPYGGGAGMVMTPQPVVDAIKAVKEKNKGKVIFLGPRGKTFNQEMAKELSKEEELIFVCGHYEGIDQRVYKYFDLEISLGDFVLTGGEMACIPVIDSISRLVPGVLGSEESFQDESYYDGTLEYPQYTRPFEFEGEKVPEVLMSGHHENIRKWRRKQSLLITKERRPDMFEKIKLSKEDIKLLKSK.

Residues G110 and 129–134 (LGDFVL) each bind S-adenosyl-L-methionine.

Belongs to the RNA methyltransferase TrmD family. As to quaternary structure, homodimer.

It is found in the cytoplasm. It carries out the reaction guanosine(37) in tRNA + S-adenosyl-L-methionine = N(1)-methylguanosine(37) in tRNA + S-adenosyl-L-homocysteine + H(+). Its function is as follows. Specifically methylates guanosine-37 in various tRNAs. In Clostridium perfringens (strain ATCC 13124 / DSM 756 / JCM 1290 / NCIMB 6125 / NCTC 8237 / Type A), this protein is tRNA (guanine-N(1)-)-methyltransferase.